Consider the following 109-residue polypeptide: Fluoride-specific ion channel FluC 1 (109 aa).

4 helical membrane-spanning segments follow: residues 1-21, 29-49, 55-75, and 87-107; these read MVIV…YFFS, LPLG…VFYN, EVYA…STLN, and VFYS…FLGI. G66 and T69 together coordinate Na(+).

The protein belongs to the fluoride channel Fluc/FEX (TC 1.A.43) family.

It is found in the cell membrane. The catalysed reaction is fluoride(in) = fluoride(out). Na(+) is not transported, but it plays an essential structural role and its presence is essential for fluoride channel function. In terms of biological role, fluoride-specific ion channel. Important for reducing fluoride concentration in the cell, thus reducing its toxicity. The polypeptide is Fluoride-specific ion channel FluC 1 (Streptococcus pneumoniae serotype 4 (strain ATCC BAA-334 / TIGR4)).